Reading from the N-terminus, the 221-residue chain is Ribosomal RNA large subunit methyltransferase E (221 aa).

Residues G60, W62, D89, D105, and D134 each coordinate S-adenosyl-L-methionine. K174 functions as the Proton acceptor in the catalytic mechanism.

This sequence belongs to the class I-like SAM-binding methyltransferase superfamily. RNA methyltransferase RlmE family.

Its subcellular location is the cytoplasm. The catalysed reaction is uridine(2552) in 23S rRNA + S-adenosyl-L-methionine = 2'-O-methyluridine(2552) in 23S rRNA + S-adenosyl-L-homocysteine + H(+). Functionally, specifically methylates the uridine in position 2552 of 23S rRNA at the 2'-O position of the ribose in the fully assembled 50S ribosomal subunit. This chain is Ribosomal RNA large subunit methyltransferase E, found in Cupriavidus taiwanensis (strain DSM 17343 / BCRC 17206 / CCUG 44338 / CIP 107171 / LMG 19424 / R1) (Ralstonia taiwanensis (strain LMG 19424)).